A 201-amino-acid chain; its full sequence is Recombination protein RecR (201 aa).

A C4-type zinc finger spans residues 57–72 (CADCRTFTEQDVCNIC). The Toprim domain maps to 81-176 (GQICVVESPA…EASRIAHGVP (96 aa)).

This sequence belongs to the RecR family.

In terms of biological role, may play a role in DNA repair. It seems to be involved in an RecBC-independent recombinational process of DNA repair. It may act with RecF and RecO. The protein is Recombination protein RecR of Salmonella agona (strain SL483).